We begin with the raw amino-acid sequence, 311 residues long: Coproporphyrin III ferrochelatase 1 (311 aa).

Fe-coproporphyrin III contacts are provided by residues Y12, R29, 45–46, S53, and Y124; that span reads RY. Fe(2+) contacts are provided by H182 and E263.

The protein belongs to the ferrochelatase family.

The protein localises to the cytoplasm. It carries out the reaction Fe-coproporphyrin III + 2 H(+) = coproporphyrin III + Fe(2+). It functions in the pathway porphyrin-containing compound metabolism; protoheme biosynthesis. Involved in coproporphyrin-dependent heme b biosynthesis. Catalyzes the insertion of ferrous iron into coproporphyrin III to form Fe-coproporphyrin III. In Bacillus cereus (strain ATCC 14579 / DSM 31 / CCUG 7414 / JCM 2152 / NBRC 15305 / NCIMB 9373 / NCTC 2599 / NRRL B-3711), this protein is Coproporphyrin III ferrochelatase 1.